The following is a 195-amino-acid chain: Putative 3-methyladenine DNA glycosylase (195 aa).

It belongs to the DNA glycosylase MPG family.

This Synechococcus sp. (strain JA-3-3Ab) (Cyanobacteria bacterium Yellowstone A-Prime) protein is Putative 3-methyladenine DNA glycosylase.